A 344-amino-acid chain; its full sequence is Phosphoribosylformylglycinamidine cyclo-ligase (344 aa).

Belongs to the AIR synthase family.

It localises to the cytoplasm. It catalyses the reaction 2-formamido-N(1)-(5-O-phospho-beta-D-ribosyl)acetamidine + ATP = 5-amino-1-(5-phospho-beta-D-ribosyl)imidazole + ADP + phosphate + H(+). The protein operates within purine metabolism; IMP biosynthesis via de novo pathway; 5-amino-1-(5-phospho-D-ribosyl)imidazole from N(2)-formyl-N(1)-(5-phospho-D-ribosyl)glycinamide: step 2/2. The polypeptide is Phosphoribosylformylglycinamidine cyclo-ligase (Synechococcus sp. (strain RCC307)).